The sequence spans 89 residues: Large ribosomal subunit protein eL43 (89 aa).

4 residues coordinate Zn(2+): Cys-38, Cys-41, Cys-56, and Cys-59. The C4-type zinc finger occupies Cys-38–Cys-59.

It belongs to the eukaryotic ribosomal protein eL43 family. Putative zinc-binding subfamily. As to quaternary structure, part of the 50S ribosomal subunit. The cofactor is Zn(2+).

In terms of biological role, binds to the 23S rRNA. This is Large ribosomal subunit protein eL43 from Methanopyrus kandleri (strain AV19 / DSM 6324 / JCM 9639 / NBRC 100938).